The chain runs to 225 residues: 3-dehydroquinate dehydratase (225 aa).

Residues Ser6, 30–32, and Arg62 each bind 3-dehydroquinate; that span reads EWR. The active-site Proton donor/acceptor is the His118. Lys143 functions as the Schiff-base intermediate with substrate in the catalytic mechanism. 3-dehydroquinate contacts are provided by Arg186, Ser205, and Gln209.

The protein belongs to the type-I 3-dehydroquinase family. Homodimer.

The catalysed reaction is 3-dehydroquinate = 3-dehydroshikimate + H2O. Its pathway is metabolic intermediate biosynthesis; chorismate biosynthesis; chorismate from D-erythrose 4-phosphate and phosphoenolpyruvate: step 3/7. In terms of biological role, involved in the third step of the chorismate pathway, which leads to the biosynthesis of aromatic amino acids. Catalyzes the cis-dehydration of 3-dehydroquinate (DHQ) and introduces the first double bond of the aromatic ring to yield 3-dehydroshikimate. In Streptococcus pneumoniae (strain P1031), this protein is 3-dehydroquinate dehydratase.